The sequence spans 155 residues: Small ribosomal subunit protein uS7 (155 aa).

The protein belongs to the universal ribosomal protein uS7 family. In terms of assembly, part of the 30S ribosomal subunit. Contacts proteins S9 and S11.

One of the primary rRNA binding proteins, it binds directly to 16S rRNA where it nucleates assembly of the head domain of the 30S subunit. Is located at the subunit interface close to the decoding center, probably blocks exit of the E-site tRNA. This is Small ribosomal subunit protein uS7 from Malacoplasma penetrans (strain HF-2) (Mycoplasma penetrans).